The primary structure comprises 156 residues: ATP synthase subunit b (156 aa).

Residues Met1–Val21 traverse the membrane as a helical segment.

Belongs to the ATPase B chain family. As to quaternary structure, F-type ATPases have 2 components, F(1) - the catalytic core - and F(0) - the membrane proton channel. F(1) has five subunits: alpha(3), beta(3), gamma(1), delta(1), epsilon(1). F(0) has three main subunits: a(1), b(2) and c(10-14). The alpha and beta chains form an alternating ring which encloses part of the gamma chain. F(1) is attached to F(0) by a central stalk formed by the gamma and epsilon chains, while a peripheral stalk is formed by the delta and b chains.

It is found in the cell inner membrane. In terms of biological role, f(1)F(0) ATP synthase produces ATP from ADP in the presence of a proton or sodium gradient. F-type ATPases consist of two structural domains, F(1) containing the extramembraneous catalytic core and F(0) containing the membrane proton channel, linked together by a central stalk and a peripheral stalk. During catalysis, ATP synthesis in the catalytic domain of F(1) is coupled via a rotary mechanism of the central stalk subunits to proton translocation. Component of the F(0) channel, it forms part of the peripheral stalk, linking F(1) to F(0). The chain is ATP synthase subunit b from Nitrosococcus oceani (strain ATCC 19707 / BCRC 17464 / JCM 30415 / NCIMB 11848 / C-107).